A 339-amino-acid polypeptide reads, in one-letter code: uncharacterized protein (339 aa).

This is an uncharacterized protein from Treponema pallidum (strain Nichols).